Consider the following 389-residue polypeptide: 26S proteasome regulatory subunit 10B (389 aa).

Lys72 carries the N6-acetyllysine modification. Gly174–Thr181 provides a ligand contact to ATP. Lys206 carries the N6-acetyllysine modification. Residue Ser244 is modified to Phosphoserine.

Belongs to the AAA ATPase family. As to quaternary structure, component of the 19S proteasome regulatory particle complex. The 26S proteasome consists of a 20S core particle (CP) and two 19S regulatory subunits (RP). The regulatory particle is made of a lid composed of 9 subunits, a base containing 6 ATPases including PSMC6 and few additional components. Interacts with PAAF1.

The protein localises to the cytoplasm. It is found in the nucleus. Its function is as follows. Component of the 26S proteasome, a multiprotein complex involved in the ATP-dependent degradation of ubiquitinated proteins. This complex plays a key role in the maintenance of protein homeostasis by removing misfolded or damaged proteins, which could impair cellular functions, and by removing proteins whose functions are no longer required. Therefore, the proteasome participates in numerous cellular processes, including cell cycle progression, apoptosis, or DNA damage repair. PSMC6 belongs to the heterohexameric ring of AAA (ATPases associated with diverse cellular activities) proteins that unfolds ubiquitinated target proteins that are concurrently translocated into a proteolytic chamber and degraded into peptides. This Homo sapiens (Human) protein is 26S proteasome regulatory subunit 10B (PSMC6).